The chain runs to 119 residues: Large ribosomal subunit protein bL20 (119 aa).

It belongs to the bacterial ribosomal protein bL20 family.

Functionally, binds directly to 23S ribosomal RNA and is necessary for the in vitro assembly process of the 50S ribosomal subunit. It is not involved in the protein synthesizing functions of that subunit. The sequence is that of Large ribosomal subunit protein bL20 from Xylella fastidiosa (strain 9a5c).